A 215-amino-acid chain; its full sequence is Orotate phosphoribosyltransferase (215 aa).

Lys25 is a binding site for 5-phospho-alpha-D-ribose 1-diphosphate. 33–34 (FF) is a binding site for orotate. Residues 71 to 72 (YK), Arg98, Lys99, Lys102, His104, and 124 to 132 (DDVITAGTA) contribute to the 5-phospho-alpha-D-ribose 1-diphosphate site. Orotate contacts are provided by Thr128 and Arg156.

Belongs to the purine/pyrimidine phosphoribosyltransferase family. PyrE subfamily. In terms of assembly, homodimer.

The enzyme catalyses orotidine 5'-phosphate + diphosphate = orotate + 5-phospho-alpha-D-ribose 1-diphosphate. It participates in pyrimidine metabolism; UMP biosynthesis via de novo pathway; UMP from orotate: step 1/2. Functionally, catalyzes the transfer of a ribosyl phosphate group from 5-phosphoribose 1-diphosphate to orotate, leading to the formation of orotidine monophosphate (OMP). The protein is Orotate phosphoribosyltransferase (ura5) of Schizosaccharomyces pombe (strain 972 / ATCC 24843) (Fission yeast).